The following is a 323-amino-acid chain: HTH-type transcriptional activator CmpR (323 aa).

Residues 4–61 form the HTH lysR-type domain; that stretch reads LTLHQLKVFEAAARHSSFTRAAEELYLTQPTVSIQVKQLTKAVGLPLFEQIGKRLYLT. Residues 21–40 constitute a DNA-binding region (H-T-H motif); that stretch reads FTRAAEELYLTQPTVSIQVK. A disordered region spans residues 304-323; the sequence is IPESTTTDPELDAPQPVVGV.

The protein belongs to the LysR transcriptional regulatory family.

Its subcellular location is the cytoplasm. Functionally, activates transcription of the cmpABCD operon under carbon dioxide-limited conditions. This Synechococcus elongatus (strain ATCC 33912 / PCC 7942 / FACHB-805) (Anacystis nidulans R2) protein is HTH-type transcriptional activator CmpR (cmpR).